The sequence spans 697 residues: uncharacterized protein (697 aa).

A DNA-binding region (zn(2)-C6 fungal-type) is located at residues 24–51; it reads CIRCRQKKIKCSGEKPSCQACSNNKVEC. A helical transmembrane segment spans residues 500–520; sequence YIMSPFVGFSILTAATIHMLL.

It is found in the nucleus membrane. This is an uncharacterized protein from Schizosaccharomyces pombe (strain 972 / ATCC 24843) (Fission yeast).